Consider the following 256-residue polypeptide: Imidazole glycerol phosphate synthase subunit hisF1 (256 aa).

Residues aspartate 12 and aspartate 131 contribute to the active site.

Belongs to the HisA/HisF family. As to quaternary structure, heterodimer of HisH and HisF.

The protein localises to the cytoplasm. The catalysed reaction is 5-[(5-phospho-1-deoxy-D-ribulos-1-ylimino)methylamino]-1-(5-phospho-beta-D-ribosyl)imidazole-4-carboxamide + L-glutamine = D-erythro-1-(imidazol-4-yl)glycerol 3-phosphate + 5-amino-1-(5-phospho-beta-D-ribosyl)imidazole-4-carboxamide + L-glutamate + H(+). The protein operates within amino-acid biosynthesis; L-histidine biosynthesis; L-histidine from 5-phospho-alpha-D-ribose 1-diphosphate: step 5/9. Its function is as follows. IGPS catalyzes the conversion of PRFAR and glutamine to IGP, AICAR and glutamate. The HisF subunit catalyzes the cyclization activity that produces IGP and AICAR from PRFAR using the ammonia provided by the HisH subunit. The protein is Imidazole glycerol phosphate synthase subunit hisF1 (hisF1) of Pseudomonas aeruginosa (strain ATCC 15692 / DSM 22644 / CIP 104116 / JCM 14847 / LMG 12228 / 1C / PRS 101 / PAO1).